The primary structure comprises 333 residues: 5-formaminoimidazole-4-carboxamide-1-(beta)-D-ribofuranosyl 5'-monophosphate synthetase (333 aa).

The 5-amino-1-(5-phospho-beta-D-ribosyl)imidazole-4-carboxamide site is built by His21 and Ser84. In terms of domain architecture, ATP-grasp spans 118–313; the sequence is MELLAAAGIP…YFDEPMDMGE (196 aa). ATP-binding positions include 141 to 187 and Glu209; that span reads PVIV…VPAY. Asn229 contacts 5-amino-1-(5-phospho-beta-D-ribosyl)imidazole-4-carboxamide. 2 residues coordinate Mg(2+): Glu268 and Glu281.

The protein belongs to the phosphohexose mutase family. Mg(2+) is required as a cofactor. The cofactor is Mn(2+).

It catalyses the reaction 5-amino-1-(5-phospho-beta-D-ribosyl)imidazole-4-carboxamide + formate + ATP = 5-formamido-1-(5-phospho-D-ribosyl)imidazole-4-carboxamide + ADP + phosphate. The protein operates within purine metabolism; IMP biosynthesis via de novo pathway; 5-formamido-1-(5-phospho-D-ribosyl)imidazole-4-carboxamide from 5-amino-1-(5-phospho-D-ribosyl)imidazole-4-carboxamide (formate route): step 1/1. Catalyzes the ATP- and formate-dependent formylation of 5-aminoimidazole-4-carboxamide-1-beta-d-ribofuranosyl 5'-monophosphate (AICAR) to 5-formaminoimidazole-4-carboxamide-1-beta-d-ribofuranosyl 5'-monophosphate (FAICAR) in the absence of folates. The sequence is that of 5-formaminoimidazole-4-carboxamide-1-(beta)-D-ribofuranosyl 5'-monophosphate synthetase from Pyrobaculum calidifontis (strain DSM 21063 / JCM 11548 / VA1).